Here is a 217-residue protein sequence, read N- to C-terminus: Small ribosomal subunit protein uS3 (217 aa).

Positions 38–106 (IRKFVQKELA…QVHINIIEIK (69 aa)) constitute a KH type-2 domain.

It belongs to the universal ribosomal protein uS3 family. In terms of assembly, part of the 30S ribosomal subunit. Forms a tight complex with proteins S10 and S14.

Functionally, binds the lower part of the 30S subunit head. Binds mRNA in the 70S ribosome, positioning it for translation. In Streptococcus sanguinis (strain SK36), this protein is Small ribosomal subunit protein uS3.